A 267-amino-acid polypeptide reads, in one-letter code: tRNA pseudouridine synthase A (267 aa).

Catalysis depends on Asp-51, which acts as the Nucleophile. Tyr-109 is a substrate binding site.

The protein belongs to the tRNA pseudouridine synthase TruA family. In terms of assembly, homodimer.

It catalyses the reaction uridine(38/39/40) in tRNA = pseudouridine(38/39/40) in tRNA. Functionally, formation of pseudouridine at positions 38, 39 and 40 in the anticodon stem and loop of transfer RNAs. The protein is tRNA pseudouridine synthase A of Staphylococcus aureus (strain Mu3 / ATCC 700698).